We begin with the raw amino-acid sequence, 125 residues long: Aldolase FrzH (125 aa).

It carries out the reaction (2S)-3-(4-methoxyphenyl)-2-[(3S)-3-(methylamino)-8-oxo-1-azaspiro[4.5]decan-1-yl]propanal = (1S,3S,6S,7S,8R)-7-hydroxy-6-[(4-methoxyphenyl)methyl]-3-(methylamino)-5-azatricyclo[6.3.1.0(1,5)]dodecan-9-one. It participates in secondary metabolite biosynthesis. Its function is as follows. Aldolase; part of the gene cluster that mediates the biosynthesis of the alkaloid (-)-FR901483, a potent immunosuppressant that shows efficacy in animal models and a probable inhibitor of purine nucleotide biosynthesis by targeting phosphoribosylpyrophosphate amidotransferase (PPAT). Within the pathway, FrzH is a new kind of aldolase with no similarities to known aldolases, and which catalyzes the intramolecular aldol condensation via formation of a C9-C3' bond to yield an aza-tricyclic product. The biosynthesis of (-)-FR901483 starts with the condensation of two L-tyrosines to yield (S,S)-dityrosyl-piperazine. This process occurs in 3 steps with the non-canonical nonribosomal peptide synthetase FrzA catalyzing the reduction of L-tyrosine into L-tyrosinal, the spontaneous condensation of 2 L-tyrosinal units, and the subsequent reduction by the NmrA-like family domain-containing oxidoreductase FrzB. The cytochrome P450 monooxygenase FrzC then performs coupling between N10 and C1' to morph the piperazine into a 1,4-diazabicyclo[3.2.1]octane spiro-fused to a 2,5-cyclohexadienone. The dienone portion is further reduced to cyclohexanone by the flavin-dependent reductase FrzD. The methyltranserases (MTs) FrzE and FrzF are then involved in the methylation at the C10' amine and the C4 phenolic oxygen, respectively. The order of the two MTs appear to be interchangeable. Cleavage of the C9-N10' bond by the dioxygenase FrzG then leads to formation of a conjugated iminium. In addition to the oxidation of C9, an additional dehydrogenation between C7 and C8 can occur to give a likely shunt product. The next biosynthetic step is the intramolecular aldol condensation catalyzed by the newly identified aldolase FrzH to yield an aza-tricyclic product with the formation of a C9-C3' bond. The short-chain dehydrogenase/reductase FrzI then produces dephospho-(-)-FR901483 that is phosphorylated at C4'-OH into (-)-FR901483 by the phosphotransferase FrzJ. The chain is Aldolase FrzH from Cladobotryum sp.